We begin with the raw amino-acid sequence, 420 residues long: ATP phosphoribosyltransferase regulatory subunit (420 aa).

The protein belongs to the class-II aminoacyl-tRNA synthetase family. HisZ subfamily. Heteromultimer composed of HisG and HisZ subunits.

The protein localises to the cytoplasm. It participates in amino-acid biosynthesis; L-histidine biosynthesis; L-histidine from 5-phospho-alpha-D-ribose 1-diphosphate: step 1/9. In terms of biological role, required for the first step of histidine biosynthesis. May allow the feedback regulation of ATP phosphoribosyltransferase activity by histidine. This chain is ATP phosphoribosyltransferase regulatory subunit, found in Bacillus thuringiensis subsp. konkukian (strain 97-27).